Here is a 417-residue protein sequence, read N- to C-terminus: Serine hydroxymethyltransferase 2 (417 aa).

(6S)-5,6,7,8-tetrahydrofolate is bound by residues leucine 121 and 125–127; that span reads GHL. Lysine 229 carries the post-translational modification N6-(pyridoxal phosphate)lysine. Residue 354–356 coordinates (6S)-5,6,7,8-tetrahydrofolate; sequence SPF.

This sequence belongs to the SHMT family. As to quaternary structure, homodimer. The cofactor is pyridoxal 5'-phosphate.

The protein resides in the cytoplasm. It carries out the reaction (6R)-5,10-methylene-5,6,7,8-tetrahydrofolate + glycine + H2O = (6S)-5,6,7,8-tetrahydrofolate + L-serine. The protein operates within one-carbon metabolism; tetrahydrofolate interconversion. It participates in amino-acid biosynthesis; glycine biosynthesis; glycine from L-serine: step 1/1. In terms of biological role, catalyzes the reversible interconversion of serine and glycine with tetrahydrofolate (THF) serving as the one-carbon carrier. This reaction serves as the major source of one-carbon groups required for the biosynthesis of purines, thymidylate, methionine, and other important biomolecules. Also exhibits THF-independent aldolase activity toward beta-hydroxyamino acids, producing glycine and aldehydes, via a retro-aldol mechanism. This Pseudomonas fluorescens (strain Pf0-1) protein is Serine hydroxymethyltransferase 2.